Reading from the N-terminus, the 868-residue chain is Monofunctional pimaradiene synthase (868 aa).

Residues Asp-620, Asp-624, Asn-764, Thr-768, and Glu-772 each coordinate Mg(2+).

It belongs to the terpene synthase family. Tpsd subfamily. Mg(2+) serves as cofactor.

The enzyme catalyses (+)-copalyl diphosphate = (-)-pimara-8(14),15-diene + diphosphate. Its pathway is terpene metabolism; oleoresin biosynthesis. In terms of biological role, involved in defensive oleoresin formation in conifers in response to insect attack or other injury. Involved in diterpene (C20) olefins biosynthesis. Monofunctional enzyme lacking the DXDD motif in the class II active site relevant for the cyclization of geranylgeranyl diphosphate (GGPP). Requires (+)-copalyl diphosphate ((+)-CPP) as substrate, but no activity with GGPP or ent-CPP. Pimaradiene is the major products of the enzyme. This Pinus contorta (Shore pine) protein is Monofunctional pimaradiene synthase.